A 224-amino-acid chain; its full sequence is Magnesium-protoporphyrin O-methyltransferase (224 aa).

The protein belongs to the class I-like SAM-binding methyltransferase superfamily. Magnesium protoporphyrin O-methyltransferase family.

The enzyme catalyses Mg-protoporphyrin IX + S-adenosyl-L-methionine = Mg-protoporphyrin IX 13-monomethyl ester + S-adenosyl-L-homocysteine. Its pathway is porphyrin-containing compound metabolism; bacteriochlorophyll biosynthesis (light-independent). In terms of biological role, converts Mg-protoporphyrin IX to Mg-protoporphyrin IX methylester using S-adenosyl-L-methionine as a cofactor. The polypeptide is Magnesium-protoporphyrin O-methyltransferase (bchM) (Rhodobacter capsulatus (Rhodopseudomonas capsulata)).